A 362-amino-acid chain; its full sequence is MKESKKRVLVGMSGGIDSTATCLMLQEQGYEIVGVTMRVWGDEPQDARELAARMGIEHYVADERVPFKDTIVKNFIDEYRQGRTPNPCVMCNPLFKFRMLIEWADKLGCDWIATGHYSRLEERNGHIYIVAGDDDKKDQSYFLWRLGQDVLRRCIFPLGNYTKQTVRDYLREKGYEAKSKEGESMEVCFIKGDYRDFLREQCPELDAEVGPGWFVSSEGVKLGQHKGFPYYTIGQRKGLEIALGKPAYVLKINPQKNTVMLGDAGQLRAEYMVAEQDNIVDEDELFACPDLAVRIRYRSRPIPCRVKRLEDGRLLVRFLAEASAIAPGQSAVFYEGRRVLGGAFIASQRGIGLVIEQNKDWK.

ATP contacts are provided by residues 11–18 (GMSGGIDS) and Met37. Catalysis depends on Cys91, which acts as the Nucleophile. Cys91 and Cys188 are disulfide-bonded. Gly115 serves as a coordination point for ATP. The interval 137 to 139 (KDQ) is interaction with tRNA. Cys188 acts as the Cysteine persulfide intermediate in catalysis. Positions 296–297 (RY) are interaction with tRNA.

The protein belongs to the MnmA/TRMU family.

The protein localises to the cytoplasm. It carries out the reaction S-sulfanyl-L-cysteinyl-[protein] + uridine(34) in tRNA + AH2 + ATP = 2-thiouridine(34) in tRNA + L-cysteinyl-[protein] + A + AMP + diphosphate + H(+). Its function is as follows. Catalyzes the 2-thiolation of uridine at the wobble position (U34) of tRNA, leading to the formation of s(2)U34. This is tRNA-specific 2-thiouridylase MnmA 3 from Bacteroides fragilis (strain ATCC 25285 / DSM 2151 / CCUG 4856 / JCM 11019 / LMG 10263 / NCTC 9343 / Onslow / VPI 2553 / EN-2).